The sequence spans 75 residues: Cytochrome c oxidase subunit 6C (75 aa).

The Mitochondrial matrix portion of the chain corresponds to 1–13 (MASSALAKPQMRG). The chain crosses the membrane as a helical span at residues 14–54 (LLARRLRIHIVGAFVVSLGVAAFYKYAVAEPRKKAYADFYR). Over 55–75 (NYDSVKYFEEMRKAGVFQSVK) the chain is Mitochondrial intermembrane.

This sequence belongs to the cytochrome c oxidase subunit 6c family. In terms of assembly, component of the cytochrome c oxidase (complex IV, CIV), a multisubunit enzyme composed of 14 subunits. The complex is composed of a catalytic core of 3 subunits MT-CO1, MT-CO2 and MT-CO3, encoded in the mitochondrial DNA, and 11 supernumerary subunits COX4I, COX5A, COX5B, COX6A, COX6B, COX6C, COX7A, COX7B, COX7C, COX8 and NDUFA4, which are encoded in the nuclear genome. The complex exists as a monomer or a dimer and forms supercomplexes (SCs) in the inner mitochondrial membrane with NADH-ubiquinone oxidoreductase (complex I, CI) and ubiquinol-cytochrome c oxidoreductase (cytochrome b-c1 complex, complex III, CIII), resulting in different assemblies (supercomplex SCI(1)III(2)IV(1) and megacomplex MCI(2)III(2)IV(2)).

Its subcellular location is the mitochondrion inner membrane. It functions in the pathway energy metabolism; oxidative phosphorylation. Functionally, component of the cytochrome c oxidase, the last enzyme in the mitochondrial electron transport chain which drives oxidative phosphorylation. The respiratory chain contains 3 multisubunit complexes succinate dehydrogenase (complex II, CII), ubiquinol-cytochrome c oxidoreductase (cytochrome b-c1 complex, complex III, CIII) and cytochrome c oxidase (complex IV, CIV), that cooperate to transfer electrons derived from NADH and succinate to molecular oxygen, creating an electrochemical gradient over the inner membrane that drives transmembrane transport and the ATP synthase. Cytochrome c oxidase is the component of the respiratory chain that catalyzes the reduction of oxygen to water. Electrons originating from reduced cytochrome c in the intermembrane space (IMS) are transferred via the dinuclear copper A center (CU(A)) of subunit 2 and heme A of subunit 1 to the active site in subunit 1, a binuclear center (BNC) formed by heme A3 and copper B (CU(B)). The BNC reduces molecular oxygen to 2 water molecules using 4 electrons from cytochrome c in the IMS and 4 protons from the mitochondrial matrix. The sequence is that of Cytochrome c oxidase subunit 6C (COX6C) from Nycticebus coucang (Slow loris).